A 96-amino-acid chain; its full sequence is Ribonuclease P protein component 1 (96 aa).

This sequence belongs to the eukaryotic/archaeal RNase P protein component 1 family. In terms of assembly, consists of a catalytic RNA component and at least 4-5 protein subunits.

Its subcellular location is the cytoplasm. The enzyme catalyses Endonucleolytic cleavage of RNA, removing 5'-extranucleotides from tRNA precursor.. Its function is as follows. Part of ribonuclease P, a protein complex that generates mature tRNA molecules by cleaving their 5'-ends. The polypeptide is Ribonuclease P protein component 1 (Methanococcus aeolicus (strain ATCC BAA-1280 / DSM 17508 / OCM 812 / Nankai-3)).